Here is an 84-residue protein sequence, read N- to C-terminus: SPbeta prophage-derived uncharacterized protein YomY (84 aa).

The sequence is that of SPbeta prophage-derived uncharacterized protein YomY (yomY) from Bacillus subtilis (strain 168).